The sequence spans 319 residues: Ferrochelatase (319 aa).

Fe cation-binding residues include H194 and E275.

It belongs to the ferrochelatase family.

It localises to the cytoplasm. It carries out the reaction heme b + 2 H(+) = protoporphyrin IX + Fe(2+). The protein operates within porphyrin-containing compound metabolism; protoheme biosynthesis; protoheme from protoporphyrin-IX: step 1/1. Functionally, catalyzes the ferrous insertion into protoporphyrin IX. The polypeptide is Ferrochelatase (Vibrio vulnificus (strain YJ016)).